A 551-amino-acid polypeptide reads, in one-letter code: Endolytic murein transglycosylase (551 aa).

The Cytoplasmic portion of the chain corresponds to 1–187; that stretch reads MSEKSREEEK…PKKEKKSHVK (187 aa). The tract at residues 38–180 is disordered; sequence VRTPANEPSA…EGAKPAKPKK (143 aa). 2 stretches are compositionally biased toward low complexity: residues 100-110 and 145-157; these read PSSPAEESGSR and QAGPETPTPATET. Positions 159-174 are enriched in basic and acidic residues; that stretch reads DIIRDTSRRSRREGAK. Residues 188 to 208 form a helical membrane-spanning segment; it reads AFVISFLVFLALLSAGGYFGY. The Extracellular portion of the chain corresponds to 209–551; sequence QYVLDSLLPI…VAEHVNSKLN (343 aa).

The protein belongs to the transglycosylase MltG family. In terms of assembly, interacts with RodZ. Interacts with MreC in the elongasome; interaction is strongly reduced when the 90 C-terminal residues of MreC are missing. Interacts with KhpB (also called EloR/Jag) via MltG's N-terminus, suggesting the N-terminus of MltG is cytoplasmic.

It is found in the cell membrane. It catalyses the reaction a peptidoglycan chain = a peptidoglycan chain with N-acetyl-1,6-anhydromuramyl-[peptide] at the reducing end + a peptidoglycan chain with N-acetylglucosamine at the non-reducing end.. Functions as a peptidoglycan terminase that cleaves nascent peptidoglycan strands endolytically to terminate their elongation. Its function is as follows. Mutations in this gene suppress deletion of PBP2b (penA); truncation at residue 168, undefined changes between residue Ile-447 and Ala-505, and mutation of Ala-505 suppress the penA deletion. Probably part of the elongasome which synthesizes peripheral peptidoglycan. The polypeptide is Endolytic murein transglycosylase (Streptococcus pneumoniae (strain ATCC BAA-255 / R6)).